The primary structure comprises 160 residues: Eosinophil cationic protein (160 aa).

The signal sequence occupies residues 1–27 (MVPKLFTSQICLLLLLGLMGVEGSLHA). The required for nearly all of the bactericidal activities; partially involved in LPS-binding stretch occupies residues 28–72 (RPPQFTRAQWFAIQHISLNPPRCTIAMRVINNYRWRCKNQNTFLR). Catalysis depends on His42, which acts as the Proton acceptor. 4 cysteine pairs are disulfide-bonded: Cys50–Cys110, Cys64–Cys123, Cys82–Cys138, and Cys89–Cys98. At Tyr60 the chain carries 3'-nitrotyrosine. Residue 65-69 (KNQNT) coordinates substrate. Residues Asn84, Asn92, and Asn119 are each glycosylated (N-linked (GlcNAc...) asparagine). His155 serves as the catalytic Proton donor.

The protein belongs to the pancreatic ribonuclease family. Interacts with bacterial lipopolysaccharide (LPS) and lipoteichoic acid (LTA). In vitro interacts with phospholipid bilayers.

The protein localises to the secreted. In terms of biological role, cytotoxin and helminthotoxin with low-efficiency ribonuclease activity. Possesses a wide variety of biological activities. Exhibits antibacterial activity. This is Eosinophil cationic protein (RNASE3) from Gorilla gorilla gorilla (Western lowland gorilla).